The sequence spans 173 residues: Shikimate kinase (173 aa).

ATP is bound at residue 11–16 (GAGKTT). Thr-15 contacts Mg(2+). Positions 33, 57, and 79 each coordinate substrate. An ATP-binding site is contributed by Arg-118. Arg-140 lines the substrate pocket.

The protein belongs to the shikimate kinase family. Monomer. Requires Mg(2+) as cofactor.

Its subcellular location is the cytoplasm. The enzyme catalyses shikimate + ATP = 3-phosphoshikimate + ADP + H(+). It participates in metabolic intermediate biosynthesis; chorismate biosynthesis; chorismate from D-erythrose 4-phosphate and phosphoenolpyruvate: step 5/7. Its function is as follows. Catalyzes the specific phosphorylation of the 3-hydroxyl group of shikimic acid using ATP as a cosubstrate. The protein is Shikimate kinase of Parabacteroides distasonis (strain ATCC 8503 / DSM 20701 / CIP 104284 / JCM 5825 / NCTC 11152).